A 76-amino-acid polypeptide reads, in one-letter code: MAAIKVKLVRGLAGCPWPHRVIVEGLGLKKRESTKLLPDTPQTLGMIAKVSYLVEWERVDAAPPPGRKARKAAARS.

Belongs to the universal ribosomal protein uL30 family. Part of the 50S ribosomal subunit.

The chain is Large ribosomal subunit protein uL30 from Anaeromyxobacter dehalogenans (strain 2CP-1 / ATCC BAA-258).